A 702-amino-acid chain; its full sequence is Cytolytic toxin-beta (702 aa).

The segment at 2-264 (PSDILVVAAL…EAPQLMADSS (263 aa)) is structural MACPF/CDC pore-forming domain. 3 N-linked (GlcNAc...) asparagine glycosylation sites follow: Asn94, Asn101, and Asn286. A structural FAT domain region spans residues 265-387 (TPILRKVRNT…DIIEEAKHKV (123 aa)). The interval 388–515 (VLSKSQMARE…PRIPPVETIQ (128 aa)) is thioredoxin (THX) domain. One can recognise a B30.2/SPRY domain in the interval 504–702 (SNPRIPPVET…ANGQIKLKGE (199 aa)).

Belongs to the SNTX/VTX toxin family. In terms of assembly, heterodimer of alpha and beta subunits; non-covalently linked. Also associates into tetramers or even higher aggregates. In terms of processing, intrachain disulfide bonds may be present in the heterodimer. As to expression, expressed by the venom gland.

The protein resides in the secreted. In terms of biological role, this heterodimer induces potent hemolytic activities (when tested on rabbit erythrocytes, EC(50)=25-56 ng/mL) due to its ability to form pores in the cell membrane. The pore may be composed of 10 alpha/beta heterodimers. The toxin shows cardiovascular effects that include a vasorelaxant action that may involve the L-arginine-nitric oxid synthase pathway. In addition, it displays edema-inducing activities, increases vascular permeability. It also shows myotoxic activities and interferes irreversibly with neuromuscular function. It also induces irreversible platelet aggregation in rabbit or rat (but not in human or mouse) whole blood. In addition, it has been observed to increase spontaneous quantal acetylcholine release from isolated frog cutaneous pectoris motor endings. The polypeptide is Cytolytic toxin-beta (Scorpaena plumieri (Spotted scorpionfish)).